An 825-amino-acid chain; its full sequence is AMP deaminase 2 (825 aa).

The disordered stretch occupies residues 1-49 (MASYPSGSGKPKAKYPFKKRASLQASTAAPEARGGLGAPPLQSARSLPG). Over residues 11–21 (PKAKYPFKKRA) the composition is skewed to basic residues. S22 is modified (phosphoserine). Residue R45 is modified to Omega-N-methylarginine. Phosphoserine occurs at positions 46, 64, and 80. Position 91 is a phosphotyrosine (Y91). A phosphoserine mark is found at S97 and S114. Position 134 is a phosphothreonine (T134). S136 and S138 each carry phosphoserine. 2 residues coordinate Zn(2+): H364 and H366. Substrate contacts are provided by residues H366 and 435-440 (KFNAKY). Residue H633 participates in Zn(2+) binding. Position 636 (E636) interacts with substrate. Residue H655 is the Proton acceptor of the active site. D710 contacts Zn(2+). 711–714 (DPLQ) contributes to the substrate binding site.

It belongs to the metallo-dependent hydrolases superfamily. Adenosine and AMP deaminases family. In terms of assembly, homotetramer. Requires Zn(2+) as cofactor. Highly expressed in cerebellum.

The enzyme catalyses AMP + H2O + H(+) = IMP + NH4(+). It participates in purine metabolism; IMP biosynthesis via salvage pathway; IMP from AMP: step 1/1. AMP deaminase plays a critical role in energy metabolism. Catalyzes the deamination of AMP to IMP and plays an important role in the purine nucleotide cycle. The polypeptide is AMP deaminase 2 (Homo sapiens (Human)).